Consider the following 417-residue polypeptide: Equilibrative nucleotide transporter 7 (417 aa).

11 helical membrane-spanning segments follow: residues L19 to T39, V54 to E74, I84 to S104, V110 to V130, P143 to L163, L184 to F204, L264 to Y284, G293 to P315, K326 to A346, W353 to F373, and M392 to I412.

Belongs to the SLC29A/ENT transporter (TC 2.A.57) family. Expressed in leaves and flowers.

Its subcellular location is the cell membrane. In terms of biological role, nucleoside transporter that can mediate uptake of adenosine, uridine, guanosine or cytidine when expressed in a heterologous system (yeast). The protein is Equilibrative nucleotide transporter 7 (ENT7) of Arabidopsis thaliana (Mouse-ear cress).